Consider the following 512-residue polypeptide: RCC1 domain-containing protein DDB_G0279253 (512 aa).

8 RCC1 repeats span residues methionine 1–aspartate 56, glycine 58–asparagine 134, asparagine 135–asparagine 185, serine 197–serine 248, glutamate 249–isoleucine 319, phenylalanine 321–asparagine 384, aspartate 386–tyrosine 443, and asparagine 454–proline 512. Residues asparagine 66–glutamate 77 are compositionally biased toward polar residues. 2 disordered regions span residues asparagine 66 to glutamine 85 and serine 162 to valine 200. Residues serine 162 to asparagine 196 are compositionally biased toward low complexity.

This Dictyostelium discoideum (Social amoeba) protein is RCC1 domain-containing protein DDB_G0279253.